The sequence spans 446 residues: Phosphoglucosamine mutase (446 aa).

S101 serves as the catalytic Phosphoserine intermediate. S101, D240, D242, and D244 together coordinate Mg(2+). Residue S101 is modified to Phosphoserine.

Belongs to the phosphohexose mutase family. Mg(2+) is required as a cofactor. In terms of processing, activated by phosphorylation.

It carries out the reaction alpha-D-glucosamine 1-phosphate = D-glucosamine 6-phosphate. Catalyzes the conversion of glucosamine-6-phosphate to glucosamine-1-phosphate. This chain is Phosphoglucosamine mutase, found in Pseudomonas putida (strain W619).